We begin with the raw amino-acid sequence, 203 residues long: Recombination protein RecR (203 aa).

The C4-type zinc-finger motif lies at cysteine 57–cysteine 72. Residues glycine 80–proline 175 enclose the Toprim domain.

Belongs to the RecR family.

May play a role in DNA repair. It seems to be involved in an RecBC-independent recombinational process of DNA repair. It may act with RecF and RecO. The sequence is that of Recombination protein RecR from Chromohalobacter salexigens (strain ATCC BAA-138 / DSM 3043 / CIP 106854 / NCIMB 13768 / 1H11).